Reading from the N-terminus, the 177-residue chain is Large ribosomal subunit protein uL6 (177 aa).

Belongs to the universal ribosomal protein uL6 family. Part of the 50S ribosomal subunit.

This protein binds to the 23S rRNA, and is important in its secondary structure. It is located near the subunit interface in the base of the L7/L12 stalk, and near the tRNA binding site of the peptidyltransferase center. The sequence is that of Large ribosomal subunit protein uL6 from Paracoccus denitrificans (strain Pd 1222).